The following is a 568-amino-acid chain: Poly(A) polymerase (568 aa).

ATP is bound by residues 87 to 89 (YGS), 99 to 102 (SDID), 100 to 102 (DID), Asp-154, Lys-215, Tyr-224, and 233 to 234 (GV). Residues Asp-100, Asp-102, and Asp-154 each contribute to the Mg(2+) site. A phosphoserine mark is found at Ser-452 and Ser-550. A disordered region spans residues 525–568 (NEKRPSKKSKRKNLDARHETVKRSKSDAASGDNINGTTAAVDVN). Residues 536–550 (KNLDARHETVKRSKS) show a composition bias toward basic and acidic residues.

The protein belongs to the poly(A) polymerase family. As to quaternary structure, component of the cleavage and polyadenylation factor (CPF) complex, which is composed of PTI1, SYC1, SSU72, GLC7, MPE1, REF2, PFS2, PTA1, YSH1/BRR5, SWD2, CFT2/YDH1, YTH1, CFT1/YHH1, FIP1 and PAP1. Interacts with FIR1 and RRP6. The cofactor is Mg(2+). Mn(2+) serves as cofactor.

It is found in the nucleus. The catalysed reaction is RNA(n) + ATP = RNA(n)-3'-adenine ribonucleotide + diphosphate. Polymerase component of the cleavage and polyadenylation factor (CPF) complex, which plays a key role in polyadenylation-dependent pre-mRNA 3'-end formation and cooperates with cleavage factors including the CFIA complex and NAB4/CFIB. In Saccharomyces cerevisiae (strain ATCC 204508 / S288c) (Baker's yeast), this protein is Poly(A) polymerase (PAP1).